Here is a 216-residue protein sequence, read N- to C-terminus: MEPRINDLQVESRVHELLDFPVHTNQISSAIYECPNDHIENPKKKPYNCPHSGAKCDVTGDIQRLLLHLRNDHNVEMSDGRSFSHRYVHHDPKHLHHATWMLTLLDCCGRKFCLYFEAFHLRKTPMYMAFMQFMGDEEEAMSFSYSLQVGGNGRKLTWQGVPRSIRDSHKTVRDSQDGLIITRKLALFFSTDNNTTDKELKLKVSGRVWREQPVSI.

The SIAH-type zinc-finger motif lies at 5–74 (INDLQVESRV…LLLHLRNDHN (70 aa)).

This sequence belongs to the SINA (Seven in absentia) family. In terms of assembly, homodimer. Interacts with SINAT1, SINAT2, SINAT3, SINAT4 and SINAT5. Interacts with ATG6 and TRAF1A. Expressed in roots, rosette leaves, cauline leaves, guard cells and flowers.

It localises to the cytoplasm. It is found in the nucleus. Probable inactive E3 ubiquitin-protein ligase that plays a role in regulation of autophagy. Upon starvation, involved in maintaining ATG6 homeostasis by competitively associating with ATG6, a component of the autophagosome complex. Acts as a positive regulator of drought stress response. Functions as a positive regulator of abscisic acid-mediated stomatal closure. The protein is Probable inactive E3 ubiquitin-protein ligase SINAT6 of Arabidopsis thaliana (Mouse-ear cress).